A 162-amino-acid polypeptide reads, in one-letter code: NADH-quinone oxidoreductase subunit I (162 aa).

2 4Fe-4S ferredoxin-type domains span residues 54–83 (RRYE…IESE) and 93–122 (TRYD…ETQI). [4Fe-4S] cluster is bound by residues C63, C66, C69, C73, C102, C105, C108, and C112.

It belongs to the complex I 23 kDa subunit family. NDH-1 is composed of 14 different subunits. Subunits NuoA, H, J, K, L, M, N constitute the membrane sector of the complex. The cofactor is [4Fe-4S] cluster.

Its subcellular location is the cell inner membrane. The enzyme catalyses a quinone + NADH + 5 H(+)(in) = a quinol + NAD(+) + 4 H(+)(out). NDH-1 shuttles electrons from NADH, via FMN and iron-sulfur (Fe-S) centers, to quinones in the respiratory chain. The immediate electron acceptor for the enzyme in this species is believed to be ubiquinone. Couples the redox reaction to proton translocation (for every two electrons transferred, four hydrogen ions are translocated across the cytoplasmic membrane), and thus conserves the redox energy in a proton gradient. This Burkholderia cenocepacia (strain ATCC BAA-245 / DSM 16553 / LMG 16656 / NCTC 13227 / J2315 / CF5610) (Burkholderia cepacia (strain J2315)) protein is NADH-quinone oxidoreductase subunit I.